The sequence spans 256 residues: 3-isopropylmalate dehydratase small subunit 2 (256 aa).

The N-terminal 59 residues, 1 to 59 (MAYSLPTFPQALPCSSTKTSSSLATFRSPFLRFNGSTSLIPSSISITSRGTSSPTIIPR), are a transit peptide targeting the chloroplast.

The protein belongs to the LeuD family. As to quaternary structure, heterodimer of the large LEUC/IIL1 subunit and the small LEUD (SSU1, SSU2 or SSU3) subunits. Expressed in vascular bundles of roots, cotyledons and rosette leaves. Expressed in stem vascular bundles which branche off into lateral inflorescences. Expressed in connective tissues in anthers. In young seedlings, expressed in cotyledon epidermal cells and vasculare bundles. In hypocotyls, expressed in parenchyma cells surrounding the vasculature and further peripheral cells. In seedling roots, expressed in cells along the vasculature. In roots of adult plants, expressed in cells closely associated with the stele. In flowering stalks, expressed in parenchyma cells associated with the phloem or the xylem. Expressed in the vasculature of sepals and petals.

The protein localises to the plastid. Its subcellular location is the chloroplast stroma. It catalyses the reaction (2R,3S)-3-isopropylmalate = (2S)-2-isopropylmalate. It carries out the reaction a 2-(omega-methylsulfanyl)alkylmalate = a 2-(omega-methylsulfanyl)alkylmaleate + H2O. The catalysed reaction is 2-(3-methylsulfanyl)propylmalate = 2-(2-methylsulfanyl)propylmaleate + H2O. The enzyme catalyses a 3-(omega-methylsulfanyl)alkylmalate = a 2-(omega-methylsulfanyl)alkylmaleate + H2O. It catalyses the reaction 2-(2-methylsulfanyl)ethylmalate = 2-(2-methylsulfanyl)ethylmaleate + H2O. It carries out the reaction 3-(2-methylsulfanyl)ethylmalate = 2-(2-methylsulfanyl)ethylmaleate + H2O. The catalysed reaction is 3-(3-methylsulfanyl)propylmalate = 2-(2-methylsulfanyl)propylmaleate + H2O. It participates in amino-acid biosynthesis; L-leucine biosynthesis; L-leucine from 3-methyl-2-oxobutanoate: step 2/4. In terms of biological role, catalyzes the isomerization between 2-isopropylmalate and 3-isopropylmalate, via the formation of 2-isopropylmaleate. Functions redundantly with LEUD2 in the methionine chain elongation pathway of aliphatic glucosinolate formation. The protein is 3-isopropylmalate dehydratase small subunit 2 of Arabidopsis thaliana (Mouse-ear cress).